Consider the following 307-residue polypeptide: UDP-N-acetylenolpyruvoylglucosamine reductase (307 aa).

One can recognise an FAD-binding PCMH-type domain in the interval 34-199 (RVGGPAQVLF…TAVRFRGTPS (166 aa)). The active site involves Arg-179. Catalysis depends on Ser-228, which acts as the Proton donor. The active site involves Glu-298.

The protein belongs to the MurB family. FAD serves as cofactor.

It localises to the cytoplasm. The enzyme catalyses UDP-N-acetyl-alpha-D-muramate + NADP(+) = UDP-N-acetyl-3-O-(1-carboxyvinyl)-alpha-D-glucosamine + NADPH + H(+). The protein operates within cell wall biogenesis; peptidoglycan biosynthesis. Functionally, cell wall formation. This chain is UDP-N-acetylenolpyruvoylglucosamine reductase, found in Bradyrhizobium sp. (strain ORS 278).